The chain runs to 358 residues: Alanine racemase (358 aa).

Lys34 functions as the Proton acceptor; specific for D-alanine in the catalytic mechanism. Lys34 carries the post-translational modification N6-(pyridoxal phosphate)lysine. Arg129 is a substrate binding site. Tyr254 serves as the catalytic Proton acceptor; specific for L-alanine. Substrate is bound at residue Met302.

This sequence belongs to the alanine racemase family. Requires pyridoxal 5'-phosphate as cofactor.

The catalysed reaction is L-alanine = D-alanine. It functions in the pathway amino-acid biosynthesis; D-alanine biosynthesis; D-alanine from L-alanine: step 1/1. Functionally, catalyzes the interconversion of L-alanine and D-alanine. May also act on other amino acids. In Vibrio parahaemolyticus serotype O3:K6 (strain RIMD 2210633), this protein is Alanine racemase (alr).